Here is a 265-residue protein sequence, read N- to C-terminus: Bidirectional sugar transporter SWEET7b (265 aa).

Residues 1–9 are Extracellular-facing; that stretch reads MVSPDLIRN. A helical membrane pass occupies residues 10 to 30; it reads MVGIVGNIISFGLFLSPVPTF. The region spanning 10–97 is the MtN3/slv 1 domain; that stretch reads MVGIVGNIIS…TIFFLFSDKK (88 aa). Over 31–45 the chain is Cytoplasmic; it reads YRIIKNKDVQDFKAD. The chain crosses the membrane as a helical span at residues 46–66; that stretch reads PYLATLLNCMLWVFYGLPIVH. The Extracellular portion of the chain corresponds to 67-69; the sequence is PNS. A helical transmembrane segment spans residues 70–90; that stretch reads ILVVTINGIGLVIEAVYLTIF. The Cytoplasmic portion of the chain corresponds to 91–101; that stretch reads FLFSDKKNKKK. A helical transmembrane segment spans residues 102 to 122; it reads MGVVLATEALFMAAVVLGVLL. Residues 123 to 131 are Extracellular-facing; the sequence is GAHTHQRRS. The chain crosses the membrane as a helical span at residues 132-152; it reads LIVGILCVIFGTIMYSSPLTI. The region spanning 133 to 215 is the MtN3/slv 2 domain; it reads IVGILCVIFG…QLILYAIYYR (83 aa). The Cytoplasmic segment spans residues 153–165; sequence MSQVVKTKSVEYM. The chain crosses the membrane as a helical span at residues 166–186; sequence PLLLSVVSFLNGLCWTSYALI. The Extracellular portion of the chain corresponds to 187–189; sequence RLD. Residues 190-210 form a helical membrane-spanning segment; the sequence is IFITIPNGLGVLFALMQLILY. The Cytoplasmic segment spans residues 211–265; sequence AIYYRTIPKKQDKNLELPTVAPVAKDTSIVTPVSKDDDVDGGNASHVTINITIEL.

It belongs to the SWEET sugar transporter family. In terms of assembly, forms homooligomers and/or heterooligomers.

The protein localises to the cell membrane. Mediates both low-affinity uptake and efflux of sugar across the plasma membrane. The chain is Bidirectional sugar transporter SWEET7b (SWEET7B) from Oryza sativa subsp. japonica (Rice).